We begin with the raw amino-acid sequence, 456 residues long: Putative alanyl-tRNA editing protein alaX (456 aa).

Zn(2+)-binding residues include His125, His129, Cys240, and His244.

Belongs to the class-II aminoacyl-tRNA synthetase family. Alax-L subfamily. Zn(2+) serves as cofactor.

May function in trans to edit the amino acid moiety from incorrectly charged tRNA(Ala). The sequence is that of Putative alanyl-tRNA editing protein alaX from Saccharomyces cerevisiae (strain ATCC 204508 / S288c) (Baker's yeast).